We begin with the raw amino-acid sequence, 647 residues long: DNA mismatch repair protein MutL (647 aa).

Belongs to the DNA mismatch repair MutL/HexB family.

This protein is involved in the repair of mismatches in DNA. It is required for dam-dependent methyl-directed DNA mismatch repair. May act as a 'molecular matchmaker', a protein that promotes the formation of a stable complex between two or more DNA-binding proteins in an ATP-dependent manner without itself being part of a final effector complex. The polypeptide is DNA mismatch repair protein MutL (Bacillus thuringiensis subsp. konkukian (strain 97-27)).